Here is a 937-residue protein sequence, read N- to C-terminus: Vacuolar membrane protease (937 aa).

Residues 1–16 are Cytoplasmic-facing; the sequence is PNGFVKFIRSIFGYRK. A helical transmembrane segment spans residues 17-37; it reads TSLTLFVILTYVAVLLLAYLD. Over 38–373 the chain is Vacuolar; sequence HSLYYSVDLP…FPTSQVVVAS (336 aa). Asn106 and Asn140 each carry an N-linked (GlcNAc...) asparagine glycan. Zn(2+) contacts are provided by His154 and Asp166. Glu201 functions as the Proton acceptor in the catalytic mechanism. Glu202, Glu227, and His300 together coordinate Zn(2+). Residues 374–394 form a helical membrane-spanning segment; sequence ILLLVLIPGISIPFLIIIFGY. At 395-407 the chain is on the cytoplasmic side; the sequence is KKNWELSFVNVTK. Residues 408–428 traverse the membrane as a helical segment; sequence FPISLAISAALLNLFTNGFIV. The Vacuolar segment spans residues 429–437; it reads PFNQFLPNS. Residues 438 to 458 traverse the membrane as a helical segment; that stretch reads SPFALVAILFATFLLLNYLIL. Residues 459 to 475 are Cytoplasmic-facing; that stretch reads NGINLIFVSYKIVNHDE. Residues 476 to 496 traverse the membrane as a helical segment; sequence KLISIIETSFLYWVVLIYSTA. The Vacuolar portion of the chain corresponds to 497–510; sequence KLANNVIGDDHSGE. The helical transmembrane segment at 511 to 531 threads the bilayer; that stretch reads FPIIFLCALQAVASIFGLIGW. Residues 532–580 lie on the Cytoplasmic side of the membrane; that stretch reads SFKPVPKEHYVVVPQEEAEPLLGSSDNFNYGSPDVEDDRLVSDGSYDWS. The helical transmembrane segment at 581–601 threads the bilayer; that stretch reads IQFLTIVPISTYLIYNSGFLV. The Vacuolar portion of the chain corresponds to 602 to 618; sequence VDGINKSIQESLISQNL. A glycan (N-linked (GlcNAc...) asparagine) is linked at Asn606. Residues 619–639 traverse the membrane as a helical segment; that stretch reads IYKLLQTFAISLSIPLLPFIF. The Cytoplasmic portion of the chain corresponds to 640 to 643; the sequence is KVNR. The helical transmembrane segment at 644 to 664 threads the bilayer; it reads LFVLALFLISTIGVLFVATAD. The Vacuolar portion of the chain corresponds to 665–937; the sequence is SFNVANPLKL…LVSVSKTVEL (273 aa). N-linked (GlcNAc...) asparagine glycans are attached at residues Asn758, Asn870, and Asn887.

Belongs to the peptidase M28 family. Zn(2+) is required as a cofactor.

The protein localises to the vacuole membrane. Functionally, may be involved in vacuolar sorting and osmoregulation. The polypeptide is Vacuolar membrane protease (Scheffersomyces stipitis (strain ATCC 58785 / CBS 6054 / NBRC 10063 / NRRL Y-11545) (Yeast)).